Consider the following 167-residue polypeptide: Ribosome rescue factor SmrB (167 aa).

One can recognise a Smr domain in the interval 91–166; it reads LDLHGLTREQ…GEAAILILVD (76 aa).

This sequence belongs to the SmrB family. In terms of assembly, associates with collided ribosomes, but not with correctly translating polysomes.

Its function is as follows. Acts as a ribosome collision sensor. Detects stalled/collided disomes (pairs of ribosomes where the leading ribosome is stalled and a second ribosome has collided with it) and endonucleolytically cleaves mRNA at the 5' boundary of the stalled ribosome. Stalled/collided disomes form a new interface (primarily via the 30S subunits) that binds SmrB. Cleaved mRNA becomes available for tmRNA ligation, leading to ribosomal subunit dissociation and rescue of stalled ribosomes. In Haemophilus influenzae (strain ATCC 51907 / DSM 11121 / KW20 / Rd), this protein is Ribosome rescue factor SmrB.